The following is a 376-amino-acid chain: Chaperone protein DnaJ 2 (376 aa).

Residues 8–72 (DYYEILGVPR…EKRKLYDMYG (65 aa)) enclose the J domain. A CR-type zinc finger spans residues 143–219 (GTTVPIEVER…CTGRGYGLVK (77 aa)). Cys-156, Cys-159, Cys-172, Cys-175, Cys-194, Cys-197, Cys-207, and Cys-210 together coordinate Zn(2+). CXXCXGXG motif repeat units follow at residues 156–163 (CSACGGTG), 172–179 (CPTCGGRG), 194–201 (CPTCGGEG), and 207–214 (CHACTGRG).

Belongs to the DnaJ family. As to quaternary structure, homodimer. Zn(2+) is required as a cofactor.

It localises to the cytoplasm. In terms of biological role, participates actively in the response to hyperosmotic and heat shock by preventing the aggregation of stress-denatured proteins and by disaggregating proteins, also in an autonomous, DnaK-independent fashion. Unfolded proteins bind initially to DnaJ; upon interaction with the DnaJ-bound protein, DnaK hydrolyzes its bound ATP, resulting in the formation of a stable complex. GrpE releases ADP from DnaK; ATP binding to DnaK triggers the release of the substrate protein, thus completing the reaction cycle. Several rounds of ATP-dependent interactions between DnaJ, DnaK and GrpE are required for fully efficient folding. Also involved, together with DnaK and GrpE, in the DNA replication of plasmids through activation of initiation proteins. This is Chaperone protein DnaJ 2 from Aquifex aeolicus (strain VF5).